The primary structure comprises 214 residues: Large ribosomal subunit protein uL29m (214 aa).

Belongs to the universal ribosomal protein uL29 family. Component of the mitochondrial large ribosomal subunit. Mature mitochondrial ribosomes consist of a small (37S) and a large (54S) subunit. The 37S subunit contains at least 33 different proteins and 1 molecule of RNA (15S). The 54S subunit contains at least 45 different proteins and 1 molecule of RNA (21S).

It is found in the mitochondrion. This Aspergillus terreus (strain NIH 2624 / FGSC A1156) protein is Large ribosomal subunit protein uL29m (mrpl4).